Consider the following 488-residue polypeptide: 3-octaprenyl-4-hydroxybenzoate carboxy-lyase (488 aa).

Mn(2+) is bound at residue N172. Prenylated FMN-binding positions include 175–177 (IYR), 189–191 (RWL), and 194–195 (RG). Position 238 (E238) interacts with Mn(2+). The active-site Proton donor is D287.

The protein belongs to the UbiD family. In terms of assembly, homohexamer. Prenylated FMN serves as cofactor. Requires Mn(2+) as cofactor.

The protein localises to the cell membrane. It carries out the reaction a 4-hydroxy-3-(all-trans-polyprenyl)benzoate + H(+) = a 2-(all-trans-polyprenyl)phenol + CO2. Its pathway is cofactor biosynthesis; ubiquinone biosynthesis. Functionally, catalyzes the decarboxylation of 3-octaprenyl-4-hydroxy benzoate to 2-octaprenylphenol, an intermediate step in ubiquinone biosynthesis. This is 3-octaprenyl-4-hydroxybenzoate carboxy-lyase from Hahella chejuensis (strain KCTC 2396).